Consider the following 301-residue polypeptide: Nucleotide-binding protein Mb1456 (301 aa).

24-31 (GLSGAGRG) serves as a coordination point for ATP. Position 75–78 (75–78 (DVRS)) interacts with GTP.

Belongs to the RapZ-like family.

Displays ATPase and GTPase activities. The polypeptide is Nucleotide-binding protein Mb1456 (Mycobacterium bovis (strain ATCC BAA-935 / AF2122/97)).